Here is a 184-residue protein sequence, read N- to C-terminus: Large ribosomal subunit protein uL22A (184 aa).

Lys-46 is covalently cross-linked (Glycyl lysine isopeptide (Lys-Gly) (interchain with G-Cter in ubiquitin)). Thr-70 bears the Phosphothreonine mark.

Belongs to the universal ribosomal protein uL22 family. In terms of assembly, component of the large ribosomal subunit (LSU). Mature yeast ribosomes consist of a small (40S) and a large (60S) subunit. The 40S small subunit contains 1 molecule of ribosomal RNA (18S rRNA) and 33 different proteins (encoded by 57 genes). The large 60S subunit contains 3 rRNA molecules (25S, 5.8S and 5S rRNA) and 46 different proteins (encoded by 81 genes). uL22 is associated with the polypeptide exit tunnel.

It localises to the cytoplasm. Functionally, component of the ribosome, a large ribonucleoprotein complex responsible for the synthesis of proteins in the cell. The small ribosomal subunit (SSU) binds messenger RNAs (mRNAs) and translates the encoded message by selecting cognate aminoacyl-transfer RNA (tRNA) molecules. The large subunit (LSU) contains the ribosomal catalytic site termed the peptidyl transferase center (PTC), which catalyzes the formation of peptide bonds, thereby polymerizing the amino acids delivered by tRNAs into a polypeptide chain. The nascent polypeptides leave the ribosome through a tunnel in the LSU and interact with protein factors that function in enzymatic processing, targeting, and the membrane insertion of nascent chains at the exit of the ribosomal tunnel. This is Large ribosomal subunit protein uL22A from Saccharomyces cerevisiae (strain ATCC 204508 / S288c) (Baker's yeast).